We begin with the raw amino-acid sequence, 209 residues long: ATP-dependent Clp protease proteolytic subunit 2 (209 aa).

The active-site Nucleophile is the Ser-106. The active site involves His-131.

The protein belongs to the peptidase S14 family. Fourteen ClpP subunits assemble into 2 heptameric rings which stack back to back to give a disk-like structure with a central cavity, resembling the structure of eukaryotic proteasomes.

The protein localises to the cytoplasm. The catalysed reaction is Hydrolysis of proteins to small peptides in the presence of ATP and magnesium. alpha-casein is the usual test substrate. In the absence of ATP, only oligopeptides shorter than five residues are hydrolyzed (such as succinyl-Leu-Tyr-|-NHMec, and Leu-Tyr-Leu-|-Tyr-Trp, in which cleavage of the -Tyr-|-Leu- and -Tyr-|-Trp bonds also occurs).. Functionally, cleaves peptides in various proteins in a process that requires ATP hydrolysis. Has a chymotrypsin-like activity. Plays a major role in the degradation of misfolded proteins. This is ATP-dependent Clp protease proteolytic subunit 2 from Mesorhizobium japonicum (strain LMG 29417 / CECT 9101 / MAFF 303099) (Mesorhizobium loti (strain MAFF 303099)).